The following is a 437-amino-acid chain: Purple acid phosphatase 21 (437 aa).

The signal sequence occupies residues methionine 1–alanine 25. Asparagine 30 is a glycosylation site (N-linked (GlcNAc...) asparagine). Aspartate 152, aspartate 179, and tyrosine 182 together coordinate Fe cation. Aspartate 179 provides a ligand contact to Zn(2+). 2 residues coordinate Zn(2+): asparagine 212 and histidine 296. Asparagine 212 contacts substrate. Histidine 306 acts as the Proton donor in catalysis. Histidine 333 is a Zn(2+) binding site. Histidine 333 to histidine 335 contacts substrate. Histidine 335 provides a ligand contact to Fe cation.

The protein belongs to the metallophosphoesterase superfamily. Purple acid phosphatase family. Homodimer. Fe cation serves as cofactor. The cofactor is Zn(2+). In terms of tissue distribution, expressed flowers and siliques.

It localises to the secreted. It carries out the reaction a phosphate monoester + H2O = an alcohol + phosphate. The sequence is that of Purple acid phosphatase 21 (PAP21) from Arabidopsis thaliana (Mouse-ear cress).